Here is a 99-residue protein sequence, read N- to C-terminus: MANVNIKPLEDKILVQINEAETTTASGLVIPDSAKEKPQEATVIAVGPGRFDEKGERIPLDIKEDDVVIFSRYGGTEIKFDGVEYLLLSARDILAIVEK.

The protein belongs to the GroES chaperonin family. Heptamer of 7 subunits arranged in a ring. Interacts with the chaperonin GroEL.

Its subcellular location is the cytoplasm. Together with the chaperonin GroEL, plays an essential role in assisting protein folding. The GroEL-GroES system forms a nano-cage that allows encapsulation of the non-native substrate proteins and provides a physical environment optimized to promote and accelerate protein folding. GroES binds to the apical surface of the GroEL ring, thereby capping the opening of the GroEL channel. This is Co-chaperonin GroES from Corynebacterium efficiens (strain DSM 44549 / YS-314 / AJ 12310 / JCM 11189 / NBRC 100395).